The chain runs to 625 residues: tRNA uridine 5-carboxymethylaminomethyl modification enzyme MnmG (625 aa).

FAD-binding positions include 9–14 (GGGHAG), Val121, and Ser177. Residue 271 to 285 (GPRYCPSIEDKVNRF) coordinates NAD(+). An FAD-binding site is contributed by Gln368.

This sequence belongs to the MnmG family. Homodimer. Heterotetramer of two MnmE and two MnmG subunits. FAD is required as a cofactor.

It is found in the cytoplasm. Its function is as follows. NAD-binding protein involved in the addition of a carboxymethylaminomethyl (cmnm) group at the wobble position (U34) of certain tRNAs, forming tRNA-cmnm(5)s(2)U34. The protein is tRNA uridine 5-carboxymethylaminomethyl modification enzyme MnmG of Aliarcobacter butzleri (strain RM4018) (Arcobacter butzleri).